The chain runs to 216 residues: MLKTDLIFERENFSHHDFQNATFKNCHFYMCSFDHADLRDAKFIDCRFIESKALEGCSFRFANLKDASFTNCMLAMSLFNGANCMGLELRKCDLKGANFQGANFANRVSNTMFFCSAFITGCNLTYCNFERVLLEKCDLFENRWNGANLAGATLKGSDLSRCEFSPEQWGTFNVEQCDLTHVELDGLDIRRVSLFGVKICDWQQEQLLAPFGLIIL.

The protein belongs to the pentapeptide repeat protein family.

Its function is as follows. Has no effect when overexpressed in E.coli. When Cys-115 is mutated to Tyr and overexpressed it increases (fluoro)quinolone resistance in E.coli up to 16-fold for ciprofloxacin, levofloxacin and nalidixic acid. The chain is Pentapeptide repeat protein VPA0095 from Vibrio parahaemolyticus serotype O3:K6 (strain RIMD 2210633).